Reading from the N-terminus, the 218-residue chain is Octanoyltransferase (218 aa).

The BPL/LPL catalytic domain occupies 30 to 217 (GEAGELVWLV…SFARNFPPLA (188 aa)). Substrate contacts are provided by residues 68-75 (RGGQYTYH), 148-150 (AIG), and 161-163 (GIA). The Acyl-thioester intermediate role is filled by cysteine 179.

Belongs to the LipB family.

The protein localises to the cytoplasm. The enzyme catalyses octanoyl-[ACP] + L-lysyl-[protein] = N(6)-octanoyl-L-lysyl-[protein] + holo-[ACP] + H(+). It functions in the pathway protein modification; protein lipoylation via endogenous pathway; protein N(6)-(lipoyl)lysine from octanoyl-[acyl-carrier-protein]: step 1/2. Functionally, catalyzes the transfer of endogenously produced octanoic acid from octanoyl-acyl-carrier-protein onto the lipoyl domains of lipoate-dependent enzymes. Lipoyl-ACP can also act as a substrate although octanoyl-ACP is likely to be the physiological substrate. The sequence is that of Octanoyltransferase from Paracoccus denitrificans (strain Pd 1222).